The primary structure comprises 282 residues: Elongation factor Ts (282 aa).

The tract at residues 80-83 (TDFV) is involved in Mg(2+) ion dislocation from EF-Tu.

Belongs to the EF-Ts family.

Its subcellular location is the cytoplasm. Functionally, associates with the EF-Tu.GDP complex and induces the exchange of GDP to GTP. It remains bound to the aminoacyl-tRNA.EF-Tu.GTP complex up to the GTP hydrolysis stage on the ribosome. The chain is Elongation factor Ts (tsf) from Pasteurella multocida (strain Pm70).